The primary structure comprises 27 residues: ALWMTLLKKVLKAAAKALNAVLVGANA.

This sequence belongs to the frog skin active peptide (FSAP) family. Dermaseptin subfamily. In terms of assembly, monomer and oligomer. Forms aggregates in aqueous environments. In terms of tissue distribution, expressed by the skin glands.

It localises to the secreted. Its function is as follows. Potent antimicrobial peptide with activity against bacteria and protozoa. Also has activity against fungi. Also shows activity against enveloped herpes simplex virus type 1. Probably acts by disturbing membrane functions with its amphipathic structure. Binds to healthy erythrocytes (this binding is receptor independent), and has strong hemolytic activity. Does not bind to P.falciparum infected erythrocytes, but accumulates within the parasite. Kills the parasite, and only at high concentrations has a hemolytic activity on the host cell. In vitro, shows high spermicidal activities. This chain is Dermaseptin-S4, found in Phyllomedusa sauvagei (Sauvage's leaf frog).